Reading from the N-terminus, the 399-residue chain is C-type lectin domain family 4 member M (399 aa).

Topologically, residues 1–49 (MSDSKEQRVQPLGLLEEDPTTSGIRLFPRDFQFQQTHGHKSSTGCLGHG) are cytoplasmic. The Endocytosis signal signature appears at 14–15 (LL). Residues 50–70 (PLVLQLLSFTLLAGFLVAILV) form a helical; Signal-anchor for type II membrane protein membrane-spanning segment. Residues 71 to 399 (QVYKGPSSLS…KKPTACFRDE (329 aa)) lie on the Extracellular side of the membrane. A glycan (N-linked (GlcNAc...) asparagine) is linked at N92. 7 tandem repeats follow at residues 108–130 (KLQE…PEKS), 131–153 (RLQE…PENS), 154–176 (RLQE…PEKS), 177–199 (KQQE…PEKS), 200–222 (KQQE…PEKS), 223–245 (KQQE…PDQS), and 246–268 (KQQQ…CCRC). The segment at 108–269 (KLQEIYQELT…AFERLCCRCP (162 aa)) is 7 X approximate tandem repeats. 4 disulfide bridges follow: C265/C395, C268/C279, C296/C389, and C368/C381. Positions 274–390 (FFQGNCYFIS…CNVDNYWICK (117 aa)) constitute a C-type lectin domain. 6 residues coordinate Ca(2+): E359, N361, S363, E366, N377, and D378. N-linked (GlcNAc...) asparagine glycosylation is present at N361.

Homotetramer.

Its subcellular location is the membrane. Functionally, probable pathogen-recognition receptor involved in peripheral immune surveillance in liver. May mediate the endocytosis of pathogens which are subsequently degraded in lysosomal compartments. Probably recognizes in a calcium-dependent manner high mannose N-linked oligosaccharides in a variety of pathogen antigens. Is a receptor for ICAM3, probably by binding to mannose-like carbohydrates. The polypeptide is C-type lectin domain family 4 member M (CLEC4M) (Nomascus concolor (Black crested gibbon)).